Consider the following 364-residue polypeptide: MSGNSIGQNFVVTTFGESHGVALGCIIDGCPPGLELTEADMQHDLDRRRPGTSRYTTARREPDEVRILSGVFEGKTTGTSIGLLIENTDQRSQDYSNIKDLFRPGHADYTYQQKYGMRDYRGGGRSSARETAMRVAAGAVAKKYLKQVHGIEIYGFMSQLGPICAETIDLDQIEQNAFFFPDASKLEALDEYMRELKKSGDSIGAKISVIATGVPVGLGEPVFDRLDADIAHALMGINAVKGVEIGDGFGVVTQKGSEGRDLMSPQGFESNHAGGVLGGISSGQPIIAHIALKPTSSISVPGQSMTAQGEMAEVVTKGRHDPCVGIRAVPIAEAMLAIVLMDHLLRHRAQNQDVRSHTPVLGMR.

The tract at residues M41 to R60 is disordered. R48 and R54 together coordinate NADP(+). Residues R125–S127, N238–A239, G278, K293–S297, and R319 each bind FMN.

This sequence belongs to the chorismate synthase family. As to quaternary structure, homotetramer. FMNH2 serves as cofactor.

The catalysed reaction is 5-O-(1-carboxyvinyl)-3-phosphoshikimate = chorismate + phosphate. It participates in metabolic intermediate biosynthesis; chorismate biosynthesis; chorismate from D-erythrose 4-phosphate and phosphoenolpyruvate: step 7/7. In terms of biological role, catalyzes the anti-1,4-elimination of the C-3 phosphate and the C-6 proR hydrogen from 5-enolpyruvylshikimate-3-phosphate (EPSP) to yield chorismate, which is the branch point compound that serves as the starting substrate for the three terminal pathways of aromatic amino acid biosynthesis. This reaction introduces a second double bond into the aromatic ring system. This is Chorismate synthase from Shewanella baltica (strain OS223).